A 176-amino-acid chain; its full sequence is MLRIARVSHNAVKMASSRGIHFSSDGFIKMKDQKHILKVMNSPENQWSTDELLSHSDHSSDEITSETLQKVSKKLAPIFKSAALPMPDSDETMFSLIKTLRTQVNLVSHIHDIDVSGVAPLTCLTPIKDFTYEQLTAEDSGEPGPEVLWDALSCAEKKDGRFFVVSRDIKQEEPTQ.

The protein belongs to the GatF family. In terms of assembly, subunit of the heterotrimeric GatFAB amidotransferase (AdT) complex, composed of A, B and F subunits.

It is found in the mitochondrion inner membrane. It catalyses the reaction L-glutamyl-tRNA(Gln) + L-glutamine + ATP + H2O = L-glutaminyl-tRNA(Gln) + L-glutamate + ADP + phosphate + H(+). In terms of biological role, allows the formation of correctly charged Gln-tRNA(Gln) through the transamidation of misacylated Glu-tRNA(Gln) in the mitochondria. The reaction takes place in the presence of glutamine and ATP through an activated gamma-phospho-Glu-tRNA(Gln). Required for proper protein synthesis within the mitochondrion. The protein is Glutamyl-tRNA(Gln) amidotransferase subunit F, mitochondrial of Yarrowia lipolytica (strain CLIB 122 / E 150) (Yeast).